The chain runs to 156 residues: Ribosomal RNA large subunit methyltransferase H (156 aa).

Residues leucine 73, glycine 104, and 123-128 each bind S-adenosyl-L-methionine; that span reads IGPLTL.

This sequence belongs to the RNA methyltransferase RlmH family. In terms of assembly, homodimer.

Its subcellular location is the cytoplasm. The enzyme catalyses pseudouridine(1915) in 23S rRNA + S-adenosyl-L-methionine = N(3)-methylpseudouridine(1915) in 23S rRNA + S-adenosyl-L-homocysteine + H(+). Specifically methylates the pseudouridine at position 1915 (m3Psi1915) in 23S rRNA. In Stenotrophomonas maltophilia (strain K279a), this protein is Ribosomal RNA large subunit methyltransferase H.